Reading from the N-terminus, the 71-residue chain is Large ribosomal subunit protein uL29 (71 aa).

It belongs to the universal ribosomal protein uL29 family.

The protein is Large ribosomal subunit protein uL29 (rpl29) of Aeropyrum pernix (strain ATCC 700893 / DSM 11879 / JCM 9820 / NBRC 100138 / K1).